Here is a 444-residue protein sequence, read N- to C-terminus: Phosphoglucosamine mutase (444 aa).

S102 (phosphoserine intermediate) is an active-site residue. 4 residues coordinate Mg(2+): S102, D241, D243, and D245. S102 is modified (phosphoserine).

It belongs to the phosphohexose mutase family. It depends on Mg(2+) as a cofactor. Post-translationally, activated by phosphorylation.

The catalysed reaction is alpha-D-glucosamine 1-phosphate = D-glucosamine 6-phosphate. In terms of biological role, catalyzes the conversion of glucosamine-6-phosphate to glucosamine-1-phosphate. This is Phosphoglucosamine mutase from Erwinia tasmaniensis (strain DSM 17950 / CFBP 7177 / CIP 109463 / NCPPB 4357 / Et1/99).